A 718-amino-acid polypeptide reads, in one-letter code: MLFSLRRLKKLANLEAFSDQKVIDSLINLGFEVDQITKLNEISGIKFGQILEIRKNPEADNLWICKVQFADKIREIQTAAKNVIENKQVLAFIPGSKSGNTTFLAKKLRGHISEGMLISAVELGFNKHLLNSELDQGVLVFDPIFDLESNPLKVLELDDLILDIKLLWNRPDGNSYLVLANELAAFFKTDFSLINKEISGKFYSELKIINKTDSKIFALEIQKLPKLALVDIFLLLKSEVKIGNLAQNFSNFILIYTGQPSYCLQLEKHQQKVELIEQKVKIKYEPDTISSYHFLNQEKKPLLIPEFSDQIIMENNSFFLIMPKFNLLKVKQIKQFLKKNSLKLTQLGKNYNYGTTFIALSFLNFFLEDQKIDFSWPINFDKSLISKKTFLDLNYNELKEILGLELSQEDISKTNLILEKIGYNFDNTSFSPPFYRVDIEFFADYAADFLRFYGLEKLKDCKLEQVKAKIPNPDFEPVKLKTLGYYETNSFLLISKEENFNPLELKSQDLLTFPSQEHTKIRYSLAWQLAKITKYNQKRKITEISLYEKGSIAGWNHSLALASTIYTSEDLKKHLKILYNYDFDFLPADSEFLNPEKSQFIYLDNVLVGWLGQVAEKYNYENVNFLEILLSKVEKIPKKEGGKIKFRPYDNSQLKYRDITLSLPMKDIPDPYLKVIQKIPEIFSVKLINYVIINNQQKITYRITGPDQVCAEIDKFYK.

A tRNA-binding domain is found at 39–153; it reads LNEISGIKFG…IFDLESNPLK (115 aa). A B5 domain is found at 386-460; the sequence is SKKTFLDLNY…RFYGLEKLKD (75 aa). Mg(2+)-binding residues include D438, D444, and D448.

The protein belongs to the phenylalanyl-tRNA synthetase beta subunit family. Type 1 subfamily. In terms of assembly, tetramer of two alpha and two beta subunits. Mg(2+) is required as a cofactor.

The protein localises to the cytoplasm. It catalyses the reaction tRNA(Phe) + L-phenylalanine + ATP = L-phenylalanyl-tRNA(Phe) + AMP + diphosphate + H(+). In Mesomycoplasma hyopneumoniae (strain J / ATCC 25934 / NCTC 10110) (Mycoplasma hyopneumoniae), this protein is Phenylalanine--tRNA ligase beta subunit.